Reading from the N-terminus, the 804-residue chain is DNA gyrase subunit A (804 aa).

The Topo IIA-type catalytic domain maps to Ile31–Leu495. Residue Tyr119 is the O-(5'-phospho-DNA)-tyrosine intermediate of the active site. The GyrA-box motif lies at Gln522–Gly528.

This sequence belongs to the type II topoisomerase GyrA/ParC subunit family. In terms of assembly, heterotetramer, composed of two GyrA and two GyrB chains. In the heterotetramer, GyrA contains the active site tyrosine that forms a transient covalent intermediate with DNA, while GyrB binds cofactors and catalyzes ATP hydrolysis.

The protein resides in the cytoplasm. The catalysed reaction is ATP-dependent breakage, passage and rejoining of double-stranded DNA.. In terms of biological role, a type II topoisomerase that negatively supercoils closed circular double-stranded (ds) DNA in an ATP-dependent manner to modulate DNA topology and maintain chromosomes in an underwound state. Negative supercoiling favors strand separation, and DNA replication, transcription, recombination and repair, all of which involve strand separation. Also able to catalyze the interconversion of other topological isomers of dsDNA rings, including catenanes and knotted rings. Type II topoisomerases break and join 2 DNA strands simultaneously in an ATP-dependent manner. The sequence is that of DNA gyrase subunit A from Thermotoga maritima (strain ATCC 43589 / DSM 3109 / JCM 10099 / NBRC 100826 / MSB8).